The following is a 125-amino-acid chain: Ribosome-binding factor A (125 aa).

Belongs to the RbfA family. As to quaternary structure, monomer. Binds 30S ribosomal subunits, but not 50S ribosomal subunits or 70S ribosomes.

The protein resides in the cytoplasm. One of several proteins that assist in the late maturation steps of the functional core of the 30S ribosomal subunit. Associates with free 30S ribosomal subunits (but not with 30S subunits that are part of 70S ribosomes or polysomes). Required for efficient processing of 16S rRNA. May interact with the 5'-terminal helix region of 16S rRNA. The polypeptide is Ribosome-binding factor A (Xylella fastidiosa (strain 9a5c)).